A 386-amino-acid chain; its full sequence is Succinyl-diaminopimelate desuccinylase (386 aa).

Position 75 (His-75) interacts with Zn(2+). Asp-77 is a catalytic residue. Position 108 (Asp-108) interacts with Zn(2+). Catalysis depends on Glu-138, which acts as the Proton acceptor. Residues Glu-139, Glu-167, and His-356 each contribute to the Zn(2+) site.

Belongs to the peptidase M20A family. DapE subfamily. Homodimer. Zn(2+) is required as a cofactor. It depends on Co(2+) as a cofactor.

The enzyme catalyses N-succinyl-(2S,6S)-2,6-diaminopimelate + H2O = (2S,6S)-2,6-diaminopimelate + succinate. Its pathway is amino-acid biosynthesis; L-lysine biosynthesis via DAP pathway; LL-2,6-diaminopimelate from (S)-tetrahydrodipicolinate (succinylase route): step 3/3. Its function is as follows. Catalyzes the hydrolysis of N-succinyl-L,L-diaminopimelic acid (SDAP), forming succinate and LL-2,6-diaminopimelate (DAP), an intermediate involved in the bacterial biosynthesis of lysine and meso-diaminopimelic acid, an essential component of bacterial cell walls. This chain is Succinyl-diaminopimelate desuccinylase, found in Caulobacter vibrioides (strain ATCC 19089 / CIP 103742 / CB 15) (Caulobacter crescentus).